The primary structure comprises 430 residues: Enolase (430 aa).

Q164 is a (2R)-2-phosphoglycerate binding site. E208 (proton donor) is an active-site residue. D245, E288, and D315 together coordinate Mg(2+). (2R)-2-phosphoglycerate is bound by residues K340, R369, S370, and K391. K340 serves as the catalytic Proton acceptor.

It belongs to the enolase family. It depends on Mg(2+) as a cofactor.

Its subcellular location is the cytoplasm. It localises to the secreted. The protein resides in the cell surface. It carries out the reaction (2R)-2-phosphoglycerate = phosphoenolpyruvate + H2O. It functions in the pathway carbohydrate degradation; glycolysis; pyruvate from D-glyceraldehyde 3-phosphate: step 4/5. Its function is as follows. Catalyzes the reversible conversion of 2-phosphoglycerate (2-PG) into phosphoenolpyruvate (PEP). It is essential for the degradation of carbohydrates via glycolysis. In Thermococcus gammatolerans (strain DSM 15229 / JCM 11827 / EJ3), this protein is Enolase.